Here is a 209-residue protein sequence, read N- to C-terminus: A-type ATP synthase subunit D (209 aa).

It belongs to the V-ATPase D subunit family. Has multiple subunits, A(3), B(3), C, D, E, F, G, I and K(x); there may be a few other subunits as well.

Its subcellular location is the cell membrane. Functionally, component of the A-type ATP synthase that produces ATP from ADP in the presence of a proton gradient across the membrane. The sequence is that of A-type ATP synthase subunit D from Methanosarcina mazei (strain ATCC BAA-159 / DSM 3647 / Goe1 / Go1 / JCM 11833 / OCM 88) (Methanosarcina frisia).